The chain runs to 398 residues: Riboflavin biosynthesis protein RibBA (398 aa).

The interval 1–199 is DHBP synthase; that stretch reads MFHPIEEALE…IKDLIEYRYN (199 aa). D-ribulose 5-phosphate contacts are provided by residues 26–27, Asp31, 138–142, and Glu162; these read RE and RAGHT. Glu27 contacts Mg(2+). His141 contacts Mg(2+). Residues 200–398 are GTP cyclohydrolase II; the sequence is ITTLVNREVD…MKKLGHLLHF (199 aa). 251 to 255 contacts GTP; that stretch reads RVHSE. 3 residues coordinate Zn(2+): Cys256, Cys267, and Cys269. Residues Gln272, 294-296, and Thr316 contribute to the GTP site; that span reads EGR. Asp328 (proton acceptor; for GTP cyclohydrolase activity) is an active-site residue. The active-site Nucleophile; for GTP cyclohydrolase activity is the Arg330. Residues Thr351 and Lys356 each contribute to the GTP site.

In the N-terminal section; belongs to the DHBP synthase family. It in the C-terminal section; belongs to the GTP cyclohydrolase II family. It depends on Mg(2+) as a cofactor. Mn(2+) serves as cofactor. Zn(2+) is required as a cofactor.

It catalyses the reaction D-ribulose 5-phosphate = (2S)-2-hydroxy-3-oxobutyl phosphate + formate + H(+). The enzyme catalyses GTP + 4 H2O = 2,5-diamino-6-hydroxy-4-(5-phosphoribosylamino)-pyrimidine + formate + 2 phosphate + 3 H(+). The protein operates within cofactor biosynthesis; riboflavin biosynthesis; 2-hydroxy-3-oxobutyl phosphate from D-ribulose 5-phosphate: step 1/1. It participates in cofactor biosynthesis; riboflavin biosynthesis; 5-amino-6-(D-ribitylamino)uracil from GTP: step 1/4. In terms of biological role, catalyzes the conversion of D-ribulose 5-phosphate to formate and 3,4-dihydroxy-2-butanone 4-phosphate. Functionally, catalyzes the conversion of GTP to 2,5-diamino-6-ribosylamino-4(3H)-pyrimidinone 5'-phosphate (DARP), formate and pyrophosphate. This chain is Riboflavin biosynthesis protein RibBA, found in Bacillus velezensis (strain DSM 23117 / BGSC 10A6 / LMG 26770 / FZB42) (Bacillus amyloliquefaciens subsp. plantarum).